Consider the following 139-residue polypeptide: Actin-depolymerizing factor 6 (139 aa).

In terms of domain architecture, ADF-H spans 5-139 (ASGMAVGDEC…SMDIVKARAL (135 aa)).

The protein belongs to the actin-binding proteins ADF family.

Actin-depolymerizing protein. Severs actin filaments (F-actin) and binds to actin monomers. The chain is Actin-depolymerizing factor 6 (ADF6) from Oryza sativa subsp. japonica (Rice).